The primary structure comprises 349 residues: Glucose 1-dehydrogenase 1 (349 aa).

Cys39 provides a ligand contact to Zn(2+). Position 41 (Thr41) interacts with substrate. Residues His64 and Glu65 each coordinate Zn(2+). Substrate-binding residues include Glu110 and Glu146. Residue Glu146 participates in Zn(2+) binding. Residues 178 to 181, 260 to 262, and 289 to 291 each bind NADP(+); these read AGPI, LGV, and SVN. Asn291 provides a ligand contact to substrate.

This sequence belongs to the zinc-containing alcohol dehydrogenase family. Glucose 1-dehydrogenase subfamily. The cofactor is Zn(2+).

It carries out the reaction D-glucose + NAD(+) = D-glucono-1,5-lactone + NADH + H(+). The catalysed reaction is D-glucose + NADP(+) = D-glucono-1,5-lactone + NADPH + H(+). Catalyzes the NAD(P)(+)-dependent oxidation of D-glucose to D-gluconate via gluconolactone. Can utilize both NAD(+) and NADP(+) as electron acceptor. Is involved in the degradation of glucose through a non-phosphorylative variant of the Entner-Doudoroff pathway. This Caldivirga maquilingensis (strain ATCC 700844 / DSM 13496 / JCM 10307 / IC-167) protein is Glucose 1-dehydrogenase 1.